The chain runs to 624 residues: FAD-dependent monooxygenase apdD (624 aa).

Residues glutamate 73 and aspartate 359 each coordinate FAD.

It belongs to the paxM FAD-dependent monooxygenase family. It depends on FAD as a cofactor.

It functions in the pathway secondary metabolite biosynthesis. Functionally, FAD-dependent monooxygenase; part of the gene cluster that mediates the biosynthesis of aspyridones. The polyketide-amino acid backbone preaspyridone A is first assembled by the PKS-NRPS hybrid apdA. The assembly of preaspyridone A is initiated by loading of malonyl-CoA onto apdA, followed by decarboxylation to yield the acetyl starter unit. The growing polyketide chain then elongates into a tetraketide. The adpA PKS module catalyzes three Claisen condensations, as well as beta-keto processing and methylation. Alpha-methylation step during polyketide synthesis is a prerequisite and a key checkpoint for chain transfer between PKS and NRPS modules. The downstream NRPS module contains the condensation (C), adenylation (A), and thiolation (T) domains and catalyzes the incorporation of tyrosine via the formation of the L-tyrosinyl-thioester and the amide linkage between L-tyrosinyl-thioester and the tetraketide. The bimodular assembly line is terminated with a reductase (R) domain that facilitates formation and release of the tetramic acid product. Because apdA lacks a designated enoylreductase (ER) domain, the required activity is provided the enoyl reductase apdC. ApdC appears to operate with different stereoselectivity in different PKS cycle. Combined with apdC, apdA is proposed to synthesize preaspyridone A via about 20 enzymatic steps. A number of oxidative steps performed successively by the cytochrome P450 monooxygenases apdE and apdB are required for the conversion of preaspyridone A to aspyridone A. The cytochrome P450 monooxygenase apdE is responsible for the oxidative dephenylation of preaspyridone A. Finally, the predicted FAD-dependent monooxygenase apdD and the acyl-CoA dehydrogenase apdG may be involved in the transformation of aspyridone A into aspyridone B. The protein is FAD-dependent monooxygenase apdD of Emericella nidulans (strain FGSC A4 / ATCC 38163 / CBS 112.46 / NRRL 194 / M139) (Aspergillus nidulans).